The primary structure comprises 206 residues: 2,3-bisphosphoglycerate-dependent phosphoglycerate mutase (206 aa).

Substrate is bound by residues 9 to 16 (RHGQSEWN), 22 to 23 (TG), arginine 61, 88 to 91 (ERDY), lysine 99, 115 to 116 (RR), and 159 to 160 (GN). The active-site Tele-phosphohistidine intermediate is the histidine 10. Glutamate 88 serves as the catalytic Proton donor/acceptor.

This sequence belongs to the phosphoglycerate mutase family. BPG-dependent PGAM subfamily. Homodimer.

It carries out the reaction (2R)-2-phosphoglycerate = (2R)-3-phosphoglycerate. The protein operates within carbohydrate degradation; glycolysis; pyruvate from D-glyceraldehyde 3-phosphate: step 3/5. Functionally, catalyzes the interconversion of 2-phosphoglycerate and 3-phosphoglycerate. The polypeptide is 2,3-bisphosphoglycerate-dependent phosphoglycerate mutase (Brucella melitensis biotype 2 (strain ATCC 23457)).